Here is a 200-residue protein sequence, read N- to C-terminus: uncharacterized protein (200 aa).

A helical membrane pass occupies residues 7–29; sequence FFFLFSFISHAMMLTGLIGSSSF.

The protein resides in the membrane. This is an uncharacterized protein from Saccharomyces cerevisiae (strain ATCC 204508 / S288c) (Baker's yeast).